Here is a 307-residue protein sequence, read N- to C-terminus: O-acetylserine dependent cystathionine beta-synthase (307 aa).

At K44 the chain carries N6-(pyridoxal phosphate)lysine. Pyridoxal 5'-phosphate is bound by residues N74, 178-182 (GSGGT), and S265.

The protein belongs to the cysteine synthase/cystathionine beta-synthase family. Pyridoxal 5'-phosphate is required as a cofactor.

It catalyses the reaction O-acetyl-L-serine + L-homocysteine = L,L-cystathionine + acetate + H(+). Catalyzes the conversion of O-acetylserine and homocysteine to cystathionine. This is O-acetylserine dependent cystathionine beta-synthase (mccA) from Bacillus subtilis (strain 168).